A 739-amino-acid chain; its full sequence is AN1-type zinc finger protein 4 (739 aa).

One can recognise a Ubiquitin-like domain in the interval 54 to 129 (MELFIETLTG…LKLVLAMRGG (76 aa)). The span at 246-255 (KPKKVVKVKP) shows a compositional bias: basic residues. Disordered stretches follow at residues 246 to 270 (KPKKVVKVKPRPPLAPRPTSSSTAA) and 287 to 316 (LPSGNAHLPETSRNAGPSPAAQAPADRPVS). Residues 673–720 (KKIMKHCFLCGKKTGLATSFECRCGNNFCASHRYAEAHGCTYDYKSAG) form an AN1-type zinc finger. The Zn(2+) site is built by C679, C682, C694, C696, C701, H704, H710, and C712.

The chain is AN1-type zinc finger protein 4 (Zfand4) from Mus musculus (Mouse).